The chain runs to 173 residues: Mediator of RNA polymerase II transcription subunit 10 (173 aa).

The segment covering 1 to 20 has biased composition (polar residues); that stretch reads MDPNSPMFQNTPQQPMSLQR. A disordered region spans residues 1-45; that stretch reads MDPNSPMFQNTPQQPMSLQRSVDDRIDRERTAKKEKDDEKKKQED. The segment covering 21–45 has biased composition (basic and acidic residues); it reads SVDDRIDRERTAKKEKDDEKKKQED.

This sequence belongs to the Mediator complex subunit 10 family. As to quaternary structure, component of the Mediator complex.

It localises to the nucleus. In terms of biological role, component of the Mediator complex, a coactivator involved in the regulated transcription of nearly all RNA polymerase II-dependent genes. Mediator functions as a bridge to convey information from gene-specific regulatory proteins to the basal RNA polymerase II transcription machinery. Mediator is recruited to promoters by direct interactions with regulatory proteins and serves as a scaffold for the assembly of a functional preinitiation complex with RNA polymerase II and the general transcription factors. The chain is Mediator of RNA polymerase II transcription subunit 10 (mdt-10) from Caenorhabditis briggsae.